The chain runs to 562 residues: Chaperonin GroEL 1 (562 aa).

ATP contacts are provided by residues 30–33 (TLGP), Lys51, 87–91 (DGTTT), Gly415, 478–480 (NAA), and Asp494.

This sequence belongs to the chaperonin (HSP60) family. Forms a cylinder of 14 subunits composed of two heptameric rings stacked back-to-back. Interacts with the co-chaperonin GroES.

It localises to the cytoplasm. The enzyme catalyses ATP + H2O + a folded polypeptide = ADP + phosphate + an unfolded polypeptide.. Functionally, together with its co-chaperonin GroES, plays an essential role in assisting protein folding. The GroEL-GroES system forms a nano-cage that allows encapsulation of the non-native substrate proteins and provides a physical environment optimized to promote and accelerate protein folding. The polypeptide is Chaperonin GroEL 1 (Sorangium cellulosum (strain So ce56) (Polyangium cellulosum (strain So ce56))).